The primary structure comprises 260 residues: HTH-type transcriptional repressor NanR (260 aa).

The HTH gntR-type domain maps to 27–95 (KKLSEMVEEE…NGERARISRP (69 aa)). The H-T-H motif DNA-binding region spans 55–74 (ERELMAFFNVGRPSVREALA).

This sequence belongs to the NanR family.

Functionally, transcriptional repressor that controls expression of the genes required for the catabolism of sialic acids. This Edwardsiella tarda (strain FL6-60) protein is HTH-type transcriptional repressor NanR.